The primary structure comprises 443 residues: Phosphoglucosamine mutase (443 aa).

Ser101 functions as the Phosphoserine intermediate in the catalytic mechanism. 4 residues coordinate Mg(2+): Ser101, Asp239, Asp241, and Asp243. Ser101 carries the post-translational modification Phosphoserine.

Belongs to the phosphohexose mutase family. Mg(2+) serves as cofactor. Post-translationally, activated by phosphorylation.

The enzyme catalyses alpha-D-glucosamine 1-phosphate = D-glucosamine 6-phosphate. In terms of biological role, catalyzes the conversion of glucosamine-6-phosphate to glucosamine-1-phosphate. This chain is Phosphoglucosamine mutase, found in Francisella tularensis subsp. tularensis (strain WY96-3418).